Here is a 394-residue protein sequence, read N- to C-terminus: p-hydroxybenzoate hydroxylase (394 aa).

Residues Ser13, Glu32, 42-47 (RIRAGV), and Gln102 each bind FAD. Residues Tyr201, 212-214 (SQR), and Tyr222 contribute to the substrate site. Asp286 is an FAD binding site. Position 293 (Pro293) interacts with substrate. Position 299-300 (299-300 (LN)) interacts with FAD.

It belongs to the aromatic-ring hydroxylase family. In terms of assembly, homodimer. Requires FAD as cofactor.

It carries out the reaction 4-hydroxybenzoate + NADPH + O2 + H(+) = 3,4-dihydroxybenzoate + NADP(+) + H2O. The protein operates within aromatic compound metabolism; benzoate degradation via hydroxylation; 3,4-dihydroxybenzoate from benzoate: step 2/2. Its function is as follows. Catalyzes the incorporation of an atom of dioxygen into p-hydroxybenzoate (p-OHB) to form 3,4-dihydroxybenzoate (3,4DOHB). The reaction occurs in two parts: reduction of the flavin adenine dinucleotide (FAD) in the enzyme by reduced nicotinamide adenine dinucleotide phosphate (NADPH) in response to binding p-hydroxybenzoate to the enzyme and oxidation of reduced FAD with oxygen to form a hydroperoxide, which then oxygenates p-hydroxybenzoate. The sequence is that of p-hydroxybenzoate hydroxylase from Pseudomonas aeruginosa (strain ATCC 15692 / DSM 22644 / CIP 104116 / JCM 14847 / LMG 12228 / 1C / PRS 101 / PAO1).